The sequence spans 972 residues: N-alpha-acetyltransferase 25, NatB auxiliary subunit (972 aa).

TPR repeat units follow at residues 11 to 44 (NDRR…HKDL), 45 to 78 (HCAK…EPTD), 79 to 112 (DNSL…VPNS), and 114 to 146 (EYHS…VPKN).

It belongs to the MDM20/NAA25 family. In terms of assembly, component of the N-terminal acetyltransferase B (NatB) complex which is composed of NAA20 and NAA25.

Its subcellular location is the cytoplasm. Non-catalytic subunit of the NatB complex which catalyzes acetylation of the N-terminal methionine residues of peptides beginning with Met-Asp, Met-Glu, Met-Asn and Met-Gln. May play a role in normal cell-cycle progression. This chain is N-alpha-acetyltransferase 25, NatB auxiliary subunit (NAA25), found in Homo sapiens (Human).